The primary structure comprises 268 residues: UPF0328 protein ECU05_1640/ECU11_0090 (268 aa).

Belongs to the UPF0328 family.

The protein is UPF0328 protein ECU05_1640/ECU11_0090 of Encephalitozoon cuniculi (strain GB-M1) (Microsporidian parasite).